The following is a 348-amino-acid chain: Dihydroorotase (348 aa).

Residues His17 and His19 each coordinate Zn(2+). Substrate is bound by residues His19–Arg21 and Asn45. The Zn(2+) site is built by Lys103, His140, and His178. At Lys103 the chain carries N6-carboxylysine. His140 is a substrate binding site. Residue Leu223 coordinates substrate. Asp251 contributes to the Zn(2+) binding site. Residue Asp251 is part of the active site. Substrate is bound by residues His255 and Ala267.

The protein belongs to the metallo-dependent hydrolases superfamily. DHOase family. Class II DHOase subfamily. As to quaternary structure, homodimer. It depends on Zn(2+) as a cofactor.

The enzyme catalyses (S)-dihydroorotate + H2O = N-carbamoyl-L-aspartate + H(+). The protein operates within pyrimidine metabolism; UMP biosynthesis via de novo pathway; (S)-dihydroorotate from bicarbonate: step 3/3. Catalyzes the reversible cyclization of carbamoyl aspartate to dihydroorotate. This Salmonella newport (strain SL254) protein is Dihydroorotase.